The chain runs to 47 residues: Lysis protein for colicin E7 (47 aa).

Residues 1-19 (MKKITGIILLLLAAIILAA) form the signal peptide. The N-palmitoyl cysteine moiety is linked to residue Cys-20. Cys-20 carries S-diacylglycerol cysteine lipidation.

It localises to the cell outer membrane. Functionally, lysis proteins are required for both colicin release and partial cell lysis. In Escherichia coli, this protein is Lysis protein for colicin E7 (lys).